The primary structure comprises 391 residues: UPF0229 protein CLH_2838 (391 aa).

Disordered regions lie at residues 1–23 (MAIF…DKRR) and 75–107 (VATG…GNEE). The segment covering 80–92 (GEEKRGDKIESGS) has biased composition (basic and acidic residues).

Belongs to the UPF0229 family.

The protein is UPF0229 protein CLH_2838 of Clostridium botulinum (strain Alaska E43 / Type E3).